The sequence spans 262 residues: Cytochrome c oxidase subunit 3 (262 aa).

7 helical membrane passes run 16-36 (PWPY…VVYF), 39-59 (SQTW…IVWW), 83-103 (GMLL…WAFF), 128-148 (FSVP…VTWA), 160-180 (AING…LQAM), 198-218 (FFVA…FLAV), and 241-261 (WYWH…YWWG).

This sequence belongs to the cytochrome c oxidase subunit 3 family. Component of the cytochrome c oxidase (complex IV, CIV), a multisubunit enzyme composed of a catalytic core of 3 subunits and several supernumerary subunits. The complex exists as a monomer or a dimer and forms supercomplexes (SCs) in the inner mitochondrial membrane with ubiquinol-cytochrome c oxidoreductase (cytochrome b-c1 complex, complex III, CIII).

The protein resides in the mitochondrion inner membrane. It carries out the reaction 4 Fe(II)-[cytochrome c] + O2 + 8 H(+)(in) = 4 Fe(III)-[cytochrome c] + 2 H2O + 4 H(+)(out). Its function is as follows. Component of the cytochrome c oxidase, the last enzyme in the mitochondrial electron transport chain which drives oxidative phosphorylation. The respiratory chain contains 3 multisubunit complexes succinate dehydrogenase (complex II, CII), ubiquinol-cytochrome c oxidoreductase (cytochrome b-c1 complex, complex III, CIII) and cytochrome c oxidase (complex IV, CIV), that cooperate to transfer electrons derived from NADH and succinate to molecular oxygen, creating an electrochemical gradient over the inner membrane that drives transmembrane transport and the ATP synthase. Cytochrome c oxidase is the component of the respiratory chain that catalyzes the reduction of oxygen to water. Electrons originating from reduced cytochrome c in the intermembrane space (IMS) are transferred via the dinuclear copper A center (CU(A)) of subunit 2 and heme A of subunit 1 to the active site in subunit 1, a binuclear center (BNC) formed by heme A3 and copper B (CU(B)). The BNC reduces molecular oxygen to 2 water molecules using 4 electrons from cytochrome c in the IMS and 4 protons from the mitochondrial matrix. The protein is Cytochrome c oxidase subunit 3 (COIII) of Metridium senile (Brown sea anemone).